Reading from the N-terminus, the 348-residue chain is SUMO-activating enzyme subunit 1 (348 aa).

It belongs to the ubiquitin-activating E1 family. In terms of assembly, heterodimer of sae1 and uba2/sae2. The heterodimer corresponds to the two domains that are encoded on a single polypeptide chain in ubiquitin-activating enzyme E1. Interacts with ube2i.

The protein localises to the nucleus. Its pathway is protein modification; protein sumoylation. The heterodimer acts as an E1 ligase for sumo1, sumo2, and sumo3. It mediates ATP-dependent activation of sumo proteins followed by formation of a thioester bond between a sumo protein and a conserved active site cysteine residue on uba2/sae2. This chain is SUMO-activating enzyme subunit 1 (sae1), found in Danio rerio (Zebrafish).